We begin with the raw amino-acid sequence, 133 residues long: Aspartate 1-decarboxylase (133 aa).

Residue Ser26 is the Schiff-base intermediate with substrate; via pyruvic acid of the active site. Pyruvic acid (Ser) is present on Ser26. A substrate-binding site is contributed by Thr58. Tyr59 acts as the Proton donor in catalysis. Residue 74–76 (GAA) coordinates substrate.

It belongs to the PanD family. In terms of assembly, heterooctamer of four alpha and four beta subunits. Pyruvate is required as a cofactor. Is synthesized initially as an inactive proenzyme, which is activated by self-cleavage at a specific serine bond to produce a beta-subunit with a hydroxyl group at its C-terminus and an alpha-subunit with a pyruvoyl group at its N-terminus.

Its subcellular location is the cytoplasm. The catalysed reaction is L-aspartate + H(+) = beta-alanine + CO2. It functions in the pathway cofactor biosynthesis; (R)-pantothenate biosynthesis; beta-alanine from L-aspartate: step 1/1. Its function is as follows. Catalyzes the pyruvoyl-dependent decarboxylation of aspartate to produce beta-alanine. The protein is Aspartate 1-decarboxylase of Legionella pneumophila (strain Paris).